A 404-amino-acid chain; its full sequence is S-adenosylmethionine synthase (404 aa).

His17 lines the ATP pocket. Asp19 contributes to the Mg(2+) binding site. K(+) is bound at residue Glu45. Residues Glu58 and Gln101 each contribute to the L-methionine site. The tract at residues 101 to 111 is flexible loop; it reads QSPDIAMGVDQ. Residues 177–179, 244–245, Asp253, 259–260, Ala276, and Lys280 each bind ATP; these read DGK, RF, and RK. L-methionine is bound at residue Asp253. Lys284 lines the L-methionine pocket.

The protein belongs to the AdoMet synthase family. In terms of assembly, homotetramer; dimer of dimers. The cofactor is Mg(2+). K(+) serves as cofactor.

It localises to the cytoplasm. It catalyses the reaction L-methionine + ATP + H2O = S-adenosyl-L-methionine + phosphate + diphosphate. It functions in the pathway amino-acid biosynthesis; S-adenosyl-L-methionine biosynthesis; S-adenosyl-L-methionine from L-methionine: step 1/1. Its function is as follows. Catalyzes the formation of S-adenosylmethionine (AdoMet) from methionine and ATP. The overall synthetic reaction is composed of two sequential steps, AdoMet formation and the subsequent tripolyphosphate hydrolysis which occurs prior to release of AdoMet from the enzyme. In Geobacillus thermodenitrificans (strain NG80-2), this protein is S-adenosylmethionine synthase.